The chain runs to 1089 residues: PALM2-AKAP2 fusion protein (1089 aa).

The stretch at S70 to I107 forms a coiled coil. 3 disordered regions span residues S165–H194, P210–N231, and P289–G362. Residues S173–L183 are compositionally biased toward basic and acidic residues. A phosphoserine mark is found at R315 and S318. A compositionally biased stretch (basic and acidic residues) spans P317 to N328. Over residues G329–A347 the composition is skewed to polar residues. Phosphoserine is present on S348. The span at S348–C357 shows a compositional bias: low complexity. A Glycyl lysine isopeptide (Lys-Gly) (interchain with G-Cter in SUMO1); alternate cross-link involves residue K370. K370 participates in a covalent cross-link: Glycyl lysine isopeptide (Lys-Gly) (interchain with G-Cter in SUMO2); alternate. Residues K429–P517 form a disordered region. Residues L455–Q470 show a composition bias toward basic and acidic residues. The segment covering Q471–L508 has biased composition (low complexity). S553 is modified (phosphoserine). The disordered stretch occupies residues T592–L644. Phosphoserine occurs at positions 678, 682, and 734. A compositionally biased stretch (polar residues) spans F712–P749. 3 disordered regions span residues F712 to E783, E800 to K899, and T915 to T934. T743 bears the Phosphothreonine mark. The PKA-RII subunit binding domain stretch occupies residues L782–Q795. Basic and acidic residues predominate over residues Q801 to S814. A Phosphoserine modification is found at S847. Residues Q850 to G871 show a composition bias toward basic and acidic residues. Positions R928–V958 form a coiled coil. Phosphoserine occurs at positions 936, 964, 995, and 1002. A disordered region spans residues Q946–L1021.

Highly expressed in lung and weakly in thymus and cerebellum. Little or no expression in liver, heart and cerebral cortex. All isoforms are expressed in lung, but KL2A and KL2B isoforms are the principal isoforms in cerebellum.

The protein localises to the apical cell membrane. Its function is as follows. Binds to regulatory subunit (RII) of protein kinase A. May be involved in establishing polarity in signaling systems or in integrating PKA-RII isoforms with downstream effectors to capture, amplify and focus diffuse, trans-cellular signals carried by cAMP. Binds tp and modulates the structure of the actin cytoskeleton. The polypeptide is PALM2-AKAP2 fusion protein (Mus musculus (Mouse)).